Here is a 201-residue protein sequence, read N- to C-terminus: ATP-dependent Clp protease proteolytic subunit (201 aa).

Catalysis depends on Ser97, which acts as the Nucleophile. The active site involves His122.

It belongs to the peptidase S14 family. In terms of assembly, fourteen ClpP subunits assemble into 2 heptameric rings which stack back to back to give a disk-like structure with a central cavity, resembling the structure of eukaryotic proteasomes.

It is found in the cytoplasm. It carries out the reaction Hydrolysis of proteins to small peptides in the presence of ATP and magnesium. alpha-casein is the usual test substrate. In the absence of ATP, only oligopeptides shorter than five residues are hydrolyzed (such as succinyl-Leu-Tyr-|-NHMec, and Leu-Tyr-Leu-|-Tyr-Trp, in which cleavage of the -Tyr-|-Leu- and -Tyr-|-Trp bonds also occurs).. Functionally, cleaves peptides in various proteins in a process that requires ATP hydrolysis. Has a chymotrypsin-like activity. Plays a major role in the degradation of misfolded proteins. The protein is ATP-dependent Clp protease proteolytic subunit of Nitratidesulfovibrio vulgaris (strain ATCC 29579 / DSM 644 / CCUG 34227 / NCIMB 8303 / VKM B-1760 / Hildenborough) (Desulfovibrio vulgaris).